The sequence spans 294 residues: Glycine--tRNA ligase alpha subunit (294 aa).

This sequence belongs to the class-II aminoacyl-tRNA synthetase family. Tetramer of two alpha and two beta subunits.

It is found in the cytoplasm. It carries out the reaction tRNA(Gly) + glycine + ATP = glycyl-tRNA(Gly) + AMP + diphosphate. This chain is Glycine--tRNA ligase alpha subunit, found in Trichormus variabilis (strain ATCC 29413 / PCC 7937) (Anabaena variabilis).